Consider the following 98-residue polypeptide: Citrate lyase acyl carrier protein (98 aa).

An O-(phosphoribosyl dephospho-coenzyme A)serine modification is found at Ser-14.

It belongs to the CitD family. In terms of assembly, oligomer with a subunit composition of (alpha,beta,gamma)6.

Its subcellular location is the cytoplasm. Functionally, covalent carrier of the coenzyme of citrate lyase. The sequence is that of Citrate lyase acyl carrier protein from Escherichia coli O81 (strain ED1a).